The following is a 295-amino-acid chain: Glutamyl-Q tRNA(Asp) synthetase (295 aa).

L-glutamate is bound by residues 9–13 and Glu45; that span reads RFAPT. The 'HIGH' region motif lies at 12 to 22; that stretch reads PTPSGYLHFGS. 4 residues coordinate Zn(2+): Cys101, Cys103, Tyr115, and Cys119. L-glutamate contacts are provided by Tyr172 and Arg190. The 'KMSKS' region motif lies at 228–232; the sequence is KLGKS. Position 231 (Lys231) interacts with ATP.

Belongs to the class-I aminoacyl-tRNA synthetase family. GluQ subfamily. It depends on Zn(2+) as a cofactor.

In terms of biological role, catalyzes the tRNA-independent activation of glutamate in presence of ATP and the subsequent transfer of glutamate onto a tRNA(Asp). Glutamate is transferred on the 2-amino-5-(4,5-dihydroxy-2-cyclopenten-1-yl) moiety of the queuosine in the wobble position of the QUC anticodon. In Pseudomonas syringae pv. tomato (strain ATCC BAA-871 / DC3000), this protein is Glutamyl-Q tRNA(Asp) synthetase.